The primary structure comprises 436 residues: ATP-dependent RNA helicase SUB2 (436 aa).

Over residues 1-16 (MSAEEDLIDYSDEELN) the composition is skewed to acidic residues. The segment at 1–33 (MSAEEDLIDYSDEELNTNETAAPAADSNGKKGE) is disordered. The Q motif motif lies at 52-80 (TGFRDFLLKPELLRAIGDCGFEHPSEVQQ). One can recognise a Helicase ATP-binding domain in the interval 83–258 (IPQAMLGGDI…KKFMQNPTEH (176 aa)). ATP is bound at residue 96–103 (AKSGLGKT). A DEAD box motif is present at residues 205–208 (DECD). The 162-residue stretch at 270–431 (GLQQYFVALE…EFPKDGIDAS (162 aa)) folds into the Helicase C-terminal domain.

Belongs to the DEAD box helicase family. DECD subfamily.

Its subcellular location is the nucleus. The catalysed reaction is ATP + H2O = ADP + phosphate + H(+). Its function is as follows. ATP-binding RNA helicase involved in transcription elongation and required for the export of mRNA out of the nucleus. SUB2 also plays a role in pre-mRNA splicing and spliceosome assembly. May be involved in rDNA and telomeric silencing, and maintenance of genome integrity. The protein is ATP-dependent RNA helicase SUB2 (SUB2) of Pyricularia oryzae (strain 70-15 / ATCC MYA-4617 / FGSC 8958) (Rice blast fungus).